The sequence spans 179 residues: MIRIFLTGYMGAGKTTLGKALARELHIPFIDLDWYIEERFHKTVGELFSERGEASFRELEKNMLHEVGEFEDVVISTGGGAPCFFDNMEYMNRVGTTVFLDVDPKVLFSRLRVAKQQRPILQGKKDDELLDFIVQALEKRAPFYRQANYIYCADKLEDRSQIETSVQQLRKLLNLHIAS.

Residue 11-16 participates in ATP binding; it reads GAGKTT. T15 contributes to the Mg(2+) binding site. Substrate is bound by residues D33, R57, and G79. R118 contributes to the ATP binding site. Position 140 (R140) interacts with substrate.

Belongs to the shikimate kinase family. In terms of assembly, monomer. The cofactor is Mg(2+).

The protein localises to the cytoplasm. The catalysed reaction is shikimate + ATP = 3-phosphoshikimate + ADP + H(+). The protein operates within metabolic intermediate biosynthesis; chorismate biosynthesis; chorismate from D-erythrose 4-phosphate and phosphoenolpyruvate: step 5/7. Its function is as follows. Catalyzes the specific phosphorylation of the 3-hydroxyl group of shikimic acid using ATP as a cosubstrate. This Bacteroides fragilis (strain ATCC 25285 / DSM 2151 / CCUG 4856 / JCM 11019 / LMG 10263 / NCTC 9343 / Onslow / VPI 2553 / EN-2) protein is Shikimate kinase.